We begin with the raw amino-acid sequence, 458 residues long: MGKEKTHVNVVVIGHVDSGKSTTTGHLIYKCGGIDKRTIEKFEKEAAELGKGSFKYAWVLDKLKAERERGITIDIALWKFETPKYHVTVIDAPGHRDFIKNMITGTSQADCAILIIAGGVGEFEAGISKDGQTREHALLAYTLGVKQLIVAINKMDSVKWDESRYQEIVKETSNFIKKVGYNPKTVPFVPISGWNGDNMIEATTNAPWYKGWEKETKAGAVKGKTLLEAIDAIEPPVRPTDKALRLPLQDVYKIGGIGTVPVGRVETGVIKPGMVVTFAPSGVTTEVKSVEMHHEQLEEGVPGDNVGFNVKNVSVKEIRRGNVCGDSKNDPPKAAESFNATVIVLNHPGQISAGYSPVLDCHTAHIACKFDELLEKNDRRTGKKLEDSPKFLKAGDAAMVKFVPSKPMCVEAFTDYPPLGRFAVRDMRQTVAVGVIKSVVKSDKAGKVTKAAQKAGKK.

A N,N,N-trimethylglycine modification is found at G2. An N6,N6-dimethyllysine; alternate modification is found at K3. An N6-methyllysine; alternate modification is found at K3. One can recognise a tr-type G domain in the interval 5–240 (KTHVNVVVIG…DAIEPPVRPT (236 aa)). The tract at residues 14-21 (GHVDSGKS) is G1. Residue 14 to 21 (GHVDSGKS) coordinates GTP. K30 carries the post-translational modification N6-methyllysine. The G2 stretch occupies residues 70–74 (GITID). At K79 the chain carries N6,N6,N6-trimethyllysine. The G3 stretch occupies residues 91 to 94 (DAPG). GTP is bound by residues 91–95 (DAPGH) and 153–156 (NKMD). A G4 region spans residues 153–156 (NKMD). The tract at residues 192–194 (SGW) is G5. Residue K316 is modified to N6,N6-dimethyllysine; alternate. An N6-methyllysine; alternate modification is found at K316. An N6-methyllysine modification is found at K390.

This sequence belongs to the TRAFAC class translation factor GTPase superfamily. Classic translation factor GTPase family. EF-Tu/EF-1A subfamily.

It is found in the cytoplasm. This protein promotes the GTP-dependent binding of aminoacyl-tRNA to the A-site of ribosomes during protein biosynthesis. This chain is Elongation factor 1-alpha (TEF), found in Eremothecium gossypii (strain ATCC 10895 / CBS 109.51 / FGSC 9923 / NRRL Y-1056) (Yeast).